The sequence spans 172 residues: Protein-export protein SecB (172 aa).

It belongs to the SecB family. In terms of assembly, homotetramer, a dimer of dimers. One homotetramer interacts with 1 SecA dimer.

It is found in the cytoplasm. Its function is as follows. One of the proteins required for the normal export of preproteins out of the cell cytoplasm. It is a molecular chaperone that binds to a subset of precursor proteins, maintaining them in a translocation-competent state. It also specifically binds to its receptor SecA. This Haemophilus ducreyi (strain 35000HP / ATCC 700724) protein is Protein-export protein SecB.